A 284-amino-acid polypeptide reads, in one-letter code: Citrate lyase subunit beta-like protein (284 aa).

Substrate-binding residues include R74 and E129. Mg(2+) is bound by residues E129 and D155.

It belongs to the HpcH/HpaI aldolase family. Citrate lyase beta subunit-like subfamily. As to quaternary structure, homotrimer. Mg(2+) serves as cofactor.

May play a role in fatty acid biosynthesis. In Deinococcus radiodurans (strain ATCC 13939 / DSM 20539 / JCM 16871 / CCUG 27074 / LMG 4051 / NBRC 15346 / NCIMB 9279 / VKM B-1422 / R1), this protein is Citrate lyase subunit beta-like protein.